The following is a 348-amino-acid chain: Protein RecA (348 aa).

Residue 65-72 (GPESSGKT) participates in ATP binding.

The protein belongs to the RecA family.

It localises to the cytoplasm. Can catalyze the hydrolysis of ATP in the presence of single-stranded DNA, the ATP-dependent uptake of single-stranded DNA by duplex DNA, and the ATP-dependent hybridization of homologous single-stranded DNAs. It interacts with LexA causing its activation and leading to its autocatalytic cleavage. The protein is Protein RecA of Vibrio anguillarum (Listonella anguillarum).